Reading from the N-terminus, the 128-residue chain is Nanos homolog 1 (128 aa).

Residues 7–23 (FDSWSDYLGLSSLISRG) are essential for its translational repressor activity. Residues 23-56 (GLQPRGEGENPSPRWNVSCPAPAEPLPSKEPEGR) are disordered. The Nanos-type zinc-finger motif lies at 60 to 114 (GCGFCRSNKEAMSLYSSHRLRSLDGRVLCPVLRGYTCPLCGANGDWAHTMRYCPL). Residues Cys-61, Cys-64, His-77, Cys-88, Cys-96, Cys-99, His-107, and Cys-112 each contribute to the Zn(2+) site. 2 short sequence motifs (C2HC) span residues 61–88 (CGFCRSNKEAMSLYSSHRLRSLDGRVLC) and 96–112 (CPLCGANGDWAHTMRYC).

The protein belongs to the nanos family. As to quaternary structure, interacts with ccnb1.

Its subcellular location is the cytoplasm. The protein resides in the perinuclear region. Acts as a translational repressor. Can mediate repression affecting different steps in the translation process: cap-driven, IRES-driven, polyadenylated RNAs or nonpolyadenylated RNAs. Essential for the development of primordial germ cells (PGCs) by ensuring their proper migration and survival. The chain is Nanos homolog 1 (nanos1) from Xenopus borealis (Kenyan clawed frog).